Here is a 142-residue protein sequence, read N- to C-terminus: Neuritin (142 aa).

Residues 1–27 (MGLKLNGRYISLILAVQIAYLVQAVRA) form the signal peptide. Gly116 is lipidated: GPI-anchor amidated glycine. Positions 117 to 142 (AAGSLLPALSVLLVSLSAALATWFSF) are cleaved as a propeptide — removed in mature form.

Belongs to the neuritin family. In terms of assembly, component of the outer core of AMPAR complex. AMPAR complex consists of an inner core made of 4 pore-forming GluA/GRIA proteins (GRIA1, GRIA2, GRIA3 and GRIA4) and 4 major auxiliary subunits arranged in a twofold symmetry. One of the two pairs of distinct binding sites is occupied either by CNIH2, CNIH3 or CACNG2, CACNG3. The other harbors CACNG2, CACNG3, CACNG4, CACNG8 or GSG1L. This inner core of AMPAR complex is complemented by outer core constituents binding directly to the GluA/GRIA proteins at sites distinct from the interaction sites of the inner core constituents. Outer core constituents include at least PRRT1, PRRT2, CKAMP44/SHISA9, FRRS1L and NRN1. The proteins of the inner and outer core serve as a platform for other, more peripherally associated AMPAR constituents. Alone or in combination, these auxiliary subunits control the gating and pharmacology of the AMPAR complex and profoundly impact their biogenesis and protein processing. Expressed in the brain (at protein level).

The protein resides in the cell membrane. The protein localises to the synapse. Functionally, promotes neurite outgrowth and especially branching of neuritic processes in primary hippocampal and cortical cells. The chain is Neuritin (Nrn1) from Mus musculus (Mouse).